Consider the following 383-residue polypeptide: Large ribosomal subunit protein uL2m (383 aa).

2 disordered regions span residues 97–122 (FPKK…GGGH) and 322–357 (MNAN…YKTR). Composition is skewed to basic residues over residues 106 to 122 (GRNH…GGGH) and 330 to 340 (GGGRGKSKGNR).

Belongs to the universal ribosomal protein uL2 family. As to quaternary structure, component of the mitochondrial large ribosomal subunit (mt-LSU). Mature N.crassa 74S mitochondrial ribosomes consist of a small (37S) and a large (54S) subunit. The 37S small subunit contains a 16S ribosomal RNA (16S mt-rRNA) and 32 different proteins. The 54S large subunit contains a 23S rRNA (23S mt-rRNA) and 42 different proteins.

It is found in the mitochondrion. Its function is as follows. Component of the mitochondrial ribosome (mitoribosome), a dedicated translation machinery responsible for the synthesis of mitochondrial genome-encoded proteins, including at least some of the essential transmembrane subunits of the mitochondrial respiratory chain. The mitoribosomes are attached to the mitochondrial inner membrane and translation products are cotranslationally integrated into the membrane. The chain is Large ribosomal subunit protein uL2m (rml2) from Neurospora crassa (strain ATCC 24698 / 74-OR23-1A / CBS 708.71 / DSM 1257 / FGSC 987).